The following is a 340-amino-acid chain: Dihydroorotate dehydrogenase (quinone) (340 aa).

FMN is bound by residues 65-69 (AGADK) and T89. A substrate-binding site is contributed by K69. 114-118 (NRNGF) serves as a coordination point for substrate. FMN contacts are provided by N142 and N175. N175 serves as a coordination point for substrate. The active-site Nucleophile is the S178. Substrate is bound at residue N180. Residues K220 and T248 each contribute to the FMN site. 249–250 (NT) is a substrate binding site. FMN-binding positions include G271, G300, and 321 to 322 (YS).

Belongs to the dihydroorotate dehydrogenase family. Type 2 subfamily. Monomer. The cofactor is FMN.

The protein localises to the cell membrane. The catalysed reaction is (S)-dihydroorotate + a quinone = orotate + a quinol. It participates in pyrimidine metabolism; UMP biosynthesis via de novo pathway; orotate from (S)-dihydroorotate (quinone route): step 1/1. Catalyzes the conversion of dihydroorotate to orotate with quinone as electron acceptor. The sequence is that of Dihydroorotate dehydrogenase (quinone) from Mannheimia succiniciproducens (strain KCTC 0769BP / MBEL55E).